The primary structure comprises 82 residues: Penaeidin-3d (82 aa).

An N-terminal signal peptide occupies residues 1–19 (MRLVVCLVFLASFALVCQG). The residue at position 20 (glutamine 20) is a Pyrrolidone carboxylic acid. Intrachain disulfides connect cysteine 51-cysteine 66, cysteine 55-cysteine 73, and cysteine 67-cysteine 74. At serine 81 the chain carries Serine amide.

This sequence belongs to the penaeidin family.

It localises to the cytoplasmic granule. Functionally, antibacterial and antifungal activity. Presents chitin-binding activity. In Penaeus vannamei (Whiteleg shrimp), this protein is Penaeidin-3d.